We begin with the raw amino-acid sequence, 626 residues long: Carnitine O-acetyltransferase (626 aa).

N6-succinyllysine is present on Lys-93. Lys-261 is modified (N6-acetyllysine; alternate). At Lys-261 the chain carries N6-succinyllysine; alternate. Lys-268 carries the post-translational modification N6-acetyllysine. His-343 serves as the catalytic Proton acceptor. CoA is bound by residues Lys-419 and 423-430; that span reads KSEKLSPD. Residues Tyr-452 and Ser-454 each coordinate (R)-carnitine. Residue Ser-456 coordinates CoA. Thr-465 contributes to the (R)-carnitine binding site. Residues Arg-504 and Gln-555 each contribute to the CoA site. Residues 624–626 carry the Microbody targeting signal motif; sequence AKL.

It belongs to the carnitine/choline acetyltransferase family. Monomer. As to expression, mostly in skeletal muscle, less in heart, liver and pancreas, only weakly detectable in brain, placenta, lung and kidney.

The protein resides in the endoplasmic reticulum. It is found in the peroxisome. Its subcellular location is the mitochondrion inner membrane. The protein localises to the mitochondrion. It carries out the reaction (R)-carnitine + acetyl-CoA = O-acetyl-(R)-carnitine + CoA. It catalyses the reaction propanoyl-CoA + (R)-carnitine = O-propanoyl-(R)-carnitine + CoA. The catalysed reaction is butanoyl-CoA + (R)-carnitine = O-butanoyl-(R)-carnitine + CoA. The enzyme catalyses hexanoyl-CoA + (R)-carnitine = O-hexanoyl-(R)-carnitine + CoA. It carries out the reaction octanoyl-CoA + (R)-carnitine = O-octanoyl-(R)-carnitine + CoA. It catalyses the reaction decanoyl-CoA + (R)-carnitine = O-decanoyl-(R)-carnitine + CoA. The catalysed reaction is 3-methylbutanoyl-CoA + (R)-carnitine = O-3-methylbutanoyl-(R)-carnitine + CoA. The enzyme catalyses 2-methylpropanoyl-CoA + (R)-carnitine = O-isobutanoyl-(R)-carnitine + CoA. It carries out the reaction 2-methylbutanoyl-CoA + (R)-carnitine = O-2-methylbutanoyl-(R)-carnitine + CoA. It catalyses the reaction acetoacetyl-CoA + (R)-carnitine = O-3-oxobutanoyl-(R)-carnitine + CoA. The catalysed reaction is 3-hydroxybutanoyl-CoA + (R)-carnitine = O-3-hydroxybutanoyl-(R)-carnitine + CoA. The enzyme catalyses 4,8-dimethylnonanoyl-CoA + (R)-carnitine = O-4,8-dimethylnonanoyl-(R)-carnitine + CoA. It carries out the reaction 2,6-dimethylheptanoyl-CoA + (R)-carnitine = O-2,6-dimethylheptanoyl-(R)-carnitine + CoA. Functionally, catalyzes the reversible transfer of acyl groups from carnitine to coenzyme A (CoA) and regulates the acyl-CoA/CoA ratio. Also plays a crucial role in the transport of fatty acids for beta-oxidation. Responsible for the synthesis of short- and branched-chain acylcarnitines. Active towards some branched-chain amino acid oxidation pathway (BCAAO) intermediates. Trans-2-enoyl-CoAs and 2-methylacyl-CoAs are poor substrates. The polypeptide is Carnitine O-acetyltransferase (Homo sapiens (Human)).